The primary structure comprises 356 residues: uncharacterized protein (356 aa).

The N-terminal stretch at 1–21 is a signal peptide; it reads MKLITAPCRALLALPFCYAFS.

This is an uncharacterized protein from Escherichia coli (strain K12).